The sequence spans 201 residues: 2-phospho-L-lactate guanylyltransferase (201 aa).

The protein belongs to the CofC family. Homodimer.

It carries out the reaction (2S)-2-phospholactate + GTP + H(+) = (2S)-lactyl-2-diphospho-5'-guanosine + diphosphate. Its pathway is cofactor biosynthesis; coenzyme F420 biosynthesis. In terms of biological role, guanylyltransferase that catalyzes the activation of (2S)-2-phospholactate (2-PL) as (2S)-lactyl-2-diphospho-5'-guanosine, via the condensation of 2-PL with GTP. It is involved in the biosynthesis of coenzyme F420, a hydride carrier cofactor. This chain is 2-phospho-L-lactate guanylyltransferase, found in Natronomonas pharaonis (strain ATCC 35678 / DSM 2160 / CIP 103997 / JCM 8858 / NBRC 14720 / NCIMB 2260 / Gabara) (Halobacterium pharaonis).